Consider the following 212-residue polypeptide: uncharacterized protein (212 aa).

The first 20 residues, 1-20 (MRRVLLCFLTLILLLPAASA), serve as a signal peptide directing secretion.

This is an uncharacterized protein from Archaeoglobus fulgidus (strain ATCC 49558 / DSM 4304 / JCM 9628 / NBRC 100126 / VC-16).